Here is a 390-residue protein sequence, read N- to C-terminus: Prostaglandin E2 receptor EP3 subtype (390 aa).

The Extracellular portion of the chain corresponds to 1–53 (MKETRGYGGDAPFCTRLNHSYTGMWAPERSAEARGNLTRPPGSGEDCGSVSVA). N-linked (GlcNAc...) asparagine glycans are attached at residues N18 and N36. The chain crosses the membrane as a helical span at residues 54-78 (FPITMLLTGFVGNALAMLLVSRSYR). The Cytoplasmic portion of the chain corresponds to 79–91 (RRESKRKKSFLLC). Residues 92-112 (IGWLALTDLVGQLLTTPVVIV) traverse the membrane as a helical segment. The Extracellular portion of the chain corresponds to 113–131 (VYLSKQRWEHIDPSGRLCT). The chain crosses the membrane as a helical span at residues 132 to 153 (FFGLTMTVFGLSSLFIASAMAV). At 154–175 (ERALAIRAPHWYASHMKTRATR) the chain is on the cytoplasmic side. The chain crosses the membrane as a helical span at residues 176–197 (AVLLGVWLAVLAFALLPVLGVG). Residues 198–227 (QYTVQWPGTWCFISTGRGGNGTSSSHNWGN) lie on the Extracellular side of the membrane. A helical membrane pass occupies residues 228–253 (LFFASAFAFLGLLALTVTFSCNLATI). Residues 254 to 283 (KALVSRCRAKATASQSSAQWGRITTETAIQ) lie on the Cytoplasmic side of the membrane. A helical transmembrane segment spans residues 284–307 (LMGIMCVLSVCWSPLLIMMLKMIF). Residues 308–327 (NQTSVEHCKTHTEKQKECNF) lie on the Extracellular side of the membrane. The helical transmembrane segment at 328 to 349 (FLIAVRLASLNQILDPWVYLLL) threads the bilayer. The Cytoplasmic portion of the chain corresponds to 350 to 390 (RKILLRKFCQIRYHTNNYASSSTSLPCQCSSTLMWSDHLER).

It belongs to the G-protein coupled receptor 1 family. Interacts (via C-terminus) with MKLN1. Detected in kidney. Expressed in small intestine, heart, pancreas, gastric fundic mucosa, mammary artery and pulmonary vessels.

The protein localises to the cell membrane. In terms of biological role, receptor for prostaglandin E2 (PGE2). The activity of this receptor can couple to both the inhibition of adenylate cyclase mediated by G(i) proteins, and to an elevation of intracellular calcium. Required for normal development of fever in response to pyrinogens, including IL1B, prostaglandin E2 and bacterial lipopolysaccharide (LPS). Required for normal potentiation of platelet aggregation by prostaglandin E2, and thus plays a role in the regulation of blood coagulation. Required for increased HCO3(-) secretion in the duodenum in response to mucosal acidification, and thereby contributes to the protection of the mucosa against acid-induced ulceration. Not required for normal kidney function, normal urine volume and osmolality. This chain is Prostaglandin E2 receptor EP3 subtype (PTGER3), found in Homo sapiens (Human).